A 161-amino-acid chain; its full sequence is 2-C-methyl-D-erythritol 2,4-cyclodiphosphate synthase (161 aa).

The a divalent metal cation site is built by Asp-8 and His-10. Residues 8-10 and 34-35 each bind 4-CDP-2-C-methyl-D-erythritol 2-phosphate; these read DVH and HS. An a divalent metal cation-binding site is contributed by His-42. 4-CDP-2-C-methyl-D-erythritol 2-phosphate is bound by residues 56 to 58, 61 to 65, 100 to 106, 132 to 135, and Phe-139; these read DIG, FPDTD, AQSPKMA, and TTEE.

Belongs to the IspF family. As to quaternary structure, homotrimer. Requires a divalent metal cation as cofactor.

The catalysed reaction is 4-CDP-2-C-methyl-D-erythritol 2-phosphate = 2-C-methyl-D-erythritol 2,4-cyclic diphosphate + CMP. It functions in the pathway isoprenoid biosynthesis; isopentenyl diphosphate biosynthesis via DXP pathway; isopentenyl diphosphate from 1-deoxy-D-xylulose 5-phosphate: step 4/6. Involved in the biosynthesis of isopentenyl diphosphate (IPP) and dimethylallyl diphosphate (DMAPP), two major building blocks of isoprenoid compounds. Catalyzes the conversion of 4-diphosphocytidyl-2-C-methyl-D-erythritol 2-phosphate (CDP-ME2P) to 2-C-methyl-D-erythritol 2,4-cyclodiphosphate (ME-CPP) with a corresponding release of cytidine 5-monophosphate (CMP). The polypeptide is 2-C-methyl-D-erythritol 2,4-cyclodiphosphate synthase (Clostridioides difficile (strain 630) (Peptoclostridium difficile)).